Consider the following 159-residue polypeptide: Eukaryotic translation initiation factor 5A-2 (159 aa).

Residues 1–12 are compositionally biased toward basic and acidic residues; it reads MSDEEHQFESKA. Residues 1 to 23 are disordered; that stretch reads MSDEEHQFESKADAGASKTYPQQ. Lys-52 bears the Hypusine mark.

This sequence belongs to the eIF-5A family. Lys-52 undergoes hypusination, a unique post-translational modification that consists in the addition of a butylamino group from spermidine to lysine side chain, leading to the formation of the unusual amino acid hypusine. eIF-5As are the only known proteins to undergo this modification, which is essential for their function.

Its function is as follows. Translation factor that promotes translation elongation and termination, particularly upon ribosome stalling at specific amino acid sequence contexts. Binds between the exit (E) and peptidyl (P) site of the ribosome and promotes rescue of stalled ribosome: specifically required for efficient translation of polyproline-containing peptides as well as other motifs that stall the ribosome. Acts as a ribosome quality control (RQC) cofactor by joining the RQC complex to facilitate peptidyl transfer during CAT tailing step. This chain is Eukaryotic translation initiation factor 5A-2 (EIF-5A2), found in Nicotiana plumbaginifolia (Leadwort-leaved tobacco).